A 1946-amino-acid chain; its full sequence is MEESEGQKCEPNLPPSGDSRQMPQQGRSNLHVTSQEDAACRRPRERLSNGNARAQVSKPARNIPRRHTLGGPRSSKEILGMQPSEMDRKREAFLEHLKQKYPHHATAIMGHQERLRDQTKSPKLSHSPQPPNLGDPVEHLSETSGDSLEAMSEGEVPSPFARGSRTRASLPVVRSANQTKERSLGVLYLQYGDETKQLRMPNEVTSTDTIRALFVSAFPQQLTMKMLESPSVAIYIKDDSRNVYYELNDVRNIQDRSLLKVYNKDPSHAFNHMTKAVNGDMRMQREIVYARGDGLVAPRPGSVAHPPHVIPNSPPSTPVPHSLPPSPSRIPYGGSRPMAIPGNATIPRDRLSSLPVSRSISPSPSAILERRDVKPDEDMSSKNLVMFRNEGFYADPYLYHEGRMSIASSHGGHPLDVPDHVIAYHRTAIRSASAYCSPSLQAEMHMEQSLYRQKSRKYPDSHLPTLGSKTPPASPHRVGDLRMIDLHPHLNTHGPPHTLQPDRASPSRQSFKKEPGTLVYIEKPRNTSGLSSLVDLGPPLVEKQGFAYSTTTIPKDRETRERMQAMEKQIASLTGLVQSALFKGPITSSSKEASSEKMVKATANRNQADGAGTAHVSAGKVLGSVEFSLPPSQPLPAGTSPIHTSLLDMRRNVAELRLQLQQMRQLQLQNQEILRAMMKKAELEISNKVKETMKRLEDPVQRQRTLVEQERQKYLHEEERIVKKLCELEDFVEDLKKDSSSTGRVVTLKDVEDGAFLLRQVGEAVATLKGEFPTLQNKMRAVLRIEVEAVRFLKEEPHKLDSLLKRVRSMTDVLTMLRRHVTDGLLKGTDASQAAQYVAMEKATAAEVLKHQEETAHAPGQPLHCSTGSPGDVKSEVVPLSTMTVHHVQSSPVVMQPSQHSSALMNPAQNLPGGTRPHTASPPAITQEVTSAQSAPGPQSPQTPVNGSSMQSLFIEEIHSVSAKNRAVSIEKAEKKWEEKRQNLEHYNGKEFEKLLEEAQANIMKSIPNLEMPPASSPVSKGDAAGDKLELSEDSPNSEQELDKIGGKSPPPPPPPPRRSYLPGSGLTTTRSGDVVYTGRSMSKVSSEDPGPTPQTRATKCPPEEPASAWAPSPPPVPAPSSKEEEEEEEEGDKIMAELQAFQKCSFMDVNPNSHAEQSRANSHLKDTRAGATAPPKEKKNLEFYHEDVRKSDVECENGPQVESQKVTAGALRPSGPPKWERVMVDSISDTSRTSECRADTFTEENATPNKSLFRDSRNYSQKNVPKVSFSSSGLNSLEGEINKGPNVSGLQCAIPDLENQKLNFGKTKEIGQQGQENADKSHIPLPTRSAEFSIHDVKTQDQDVPVTGYGQVVLRSKVGRHANMNMNEDGESTPSSPSEEHTATDNIAFMITKTAVQVLSSGEVHDIVSQKGQDVQTVNIDGRKETASQHEGTEGEEPVVCLDKKPVIIIFDEPMDIRSAYKRLSTIFEECDEELERMLTEEKIEEEEEDENEDSGVRTSSQMSCEQVDSRSDRMGQKAETQSQPHVLSAELLTPGVQGVRKAEQRKLSSADSPDSGNKCGMVDDQFESPKKKFKFKFPKKQLAALTQAIRTGTKTGKKTLQVVVYEEEEEDGTLKQHKEAKRFEITRSQPEDALKTMARRQEQLSPEGTLPASRTDEIRKSTYRTLDSLEQTIKQLENTISEMSPRALVDTSCSSNRDCGASLPHMAQEVSPRSLLVLDEVPPAPEPPTSISPASRKGSSTTPQTSRMPVPMTSKNRPGSLDKASKQSKLQDPRQYRQANGSAKKAGGDCKPTSPSLPASKIPALSPSSGKSSSLPSASGDSSNLPNAPATKPSIASTPLSPQAGRSAHSASLIPSVSNGSLKFQSPPHAGKGHHHLSFALQTQNGRAAPTTSSSSSPPSPASPTSLNQGARGIRTIHTPSLASYKAQNGSSSKATPSTAKETS.

Disordered stretches follow at residues 1 to 83 (MEES…GMQP) and 113 to 176 (ERLR…VRSA). Polar residues predominate over residues 18–36 (DSRQMPQQGRSNLHVTSQE). Basic and acidic residues predominate over residues 38–47 (AACRRPRERL). Position 169 is a phosphoserine (Ser169). The residue at position 244 (Tyr244) is a Phosphotyrosine. 2 disordered regions span residues 305–324 (HPPH…HSLP) and 339–374 (AIPG…RDVK). Over residues 308-324 (HVIPNSPPSTPVPHSLP) the composition is skewed to pro residues. A compositionally biased stretch (low complexity) spans 352 to 367 (SSLPVSRSISPSPSAI). Ser357 carries an O-linked (GlcNAc) serine glycan. 2 positions are modified to phosphoserine: Ser361 and Ser365. Tyr393 carries the phosphotyrosine modification. A disordered region spans residues 455 to 512 (SRKYPDSHLPTLGSKTPPASPHRVGDLRMIDLHPHLNTHGPPHTLQPDRASPSRQSFK). Phosphothreonine is present on Thr470. Ser474 is subject to Phosphoserine. Residues 477-488 (RVGDLRMIDLHP) are compositionally biased toward basic and acidic residues. Coiled-coil stretches lie at residues 557-581 (RETR…QSAL) and 644-685 (TSLL…ELEI). Residue Ser809 is modified to Phosphoserine. Disordered stretches follow at residues 853–875 (EETA…DVKS) and 891–947 (SPVV…PVNG). Polar residues-rich tracts occupy residues 891-909 (SPVV…NPAQ) and 927-947 (QEVT…PVNG). The stretch at 962–990 (SAKNRAVSIEKAEKKWEEKRQNLEHYNGK) forms a coiled coil. A disordered region spans residues 1008–1221 (PNLEMPPASS…LRPSGPPKWE (214 aa)). Residues Ser1032, Ser1035, Ser1038, and Ser1049 each carry the phosphoserine modification. Over residues 1049 to 1058 (SPPPPPPPPR) the composition is skewed to pro residues. Positions 1151 to 1162 (NPNSHAEQSRAN) are enriched in polar residues. Positions 1176–1194 (PKEKKNLEFYHEDVRKSDV) are enriched in basic and acidic residues. Ser1466 bears the Phosphoserine mark. Residues 1469-1495 (FEECDEELERMLTEEKIEEEEEDENED) are a coiled coil. 3 disordered regions span residues 1482-1567 (EEKI…VDDQ), 1622-1664 (AKRF…RKST), and 1691-1946 (VDTS…KETS). Over residues 1484–1495 (KIEEEEEDENED) the composition is skewed to acidic residues. The span at 1498 to 1508 (VRTSSQMSCEQ) shows a compositional bias: polar residues. 2 stretches are compositionally biased toward basic and acidic residues: residues 1509–1518 (VDSRSDRMGQ) and 1622–1644 (AKRF…RRQE). The stretch at 1659–1688 (EIRKSTYRTLDSLEQTIKQLENTISEMSPR) forms a coiled coil. Polar residues predominate over residues 1739 to 1759 (KGSSTTPQTSRMPVPMTSKNR). Ser1741 carries the phosphoserine modification. The segment covering 1765 to 1777 (KASKQSKLQDPRQ) has biased composition (basic and acidic residues). The span at 1806-1825 (ALSPSSGKSSSLPSASGDSS) shows a compositional bias: low complexity. Ser1843 carries the post-translational modification Phosphoserine. The segment covering 1851–1866 (HSASLIPSVSNGSLKF) has biased composition (polar residues). The span at 1890-1899 (AAPTTSSSSS) shows a compositional bias: low complexity. A phosphoserine mark is found at Ser1899, Ser1902, and Ser1905. The span at 1920 to 1946 (HTPSLASYKAQNGSSSKATPSTAKETS) shows a compositional bias: polar residues.

As to quaternary structure, interacts with CPNE4 (via VWFA domain). Expressed predominantly in the notochord and mesonephros during embryogenesis as well as in other areas such as the epithalamus sulcus, lens vesicle, inner retinal layer, heart, hepatic primordial surface, infundibulum, surface ectoderm, hind gut and limb bud mesenchyme. In adults, expressed in a range of tissues including the nucleus pulposus, corpus callosum, kidney, cardiac muscle, Sertoli cells and hair follicles.

Its subcellular location is the cytoplasm. It localises to the cytoskeleton. It is found in the microtubule organizing center. The protein resides in the centrosome. In terms of biological role, required for normal development of intervertebral disks. The sequence is that of Sickle tail protein from Mus musculus (Mouse).